The chain runs to 551 residues: Glucans biosynthesis protein D (551 aa).

Positions 1–32 form a signal peptide, tat-type signal; it reads MNRRRFIKGSMAMAAVCGSSGIASLFSQAAFA.

This sequence belongs to the OpgD/OpgG family. In terms of processing, predicted to be exported by the Tat system. The position of the signal peptide cleavage has not been experimentally proven.

Its subcellular location is the periplasm. The protein operates within glycan metabolism; osmoregulated periplasmic glucan (OPG) biosynthesis. In terms of biological role, probably involved in the control of the structural glucose backbone of osmoregulated periplasmic glucans (OPGs). The polypeptide is Glucans biosynthesis protein D (Salmonella paratyphi A (strain ATCC 9150 / SARB42)).